Consider the following 207-residue polypeptide: MARYIGPKAKLSRREGTDLFLKSARRSLADKCKLDSKPGQHGRISGARTSDYGTQLREKQKVKRIYGVLERQFRRYFAEADRRKGNTGETLLQLLESRLDNVVYRMGFGSTRAEARQLVSHKAITVNGIVANIPSQQVKAGDVVAIREKAKKQARIVEALSLAEQGGMPSWVAVDAKKFEGTFKQVPERADIAGDINESLIVELYSR.

Residues 97–160 enclose the S4 RNA-binding domain; it reads SRLDNVVYRM…KKQARIVEAL (64 aa).

Belongs to the universal ribosomal protein uS4 family. As to quaternary structure, part of the 30S ribosomal subunit. Contacts protein S5. The interaction surface between S4 and S5 is involved in control of translational fidelity.

Functionally, one of the primary rRNA binding proteins, it binds directly to 16S rRNA where it nucleates assembly of the body of the 30S subunit. With S5 and S12 plays an important role in translational accuracy. In Burkholderia mallei (strain NCTC 10247), this protein is Small ribosomal subunit protein uS4.